We begin with the raw amino-acid sequence, 102 residues long: Iron-sulfur cluster assembly protein CyaY (102 aa).

It belongs to the frataxin family.

Its function is as follows. Involved in iron-sulfur (Fe-S) cluster assembly. May act as a regulator of Fe-S biogenesis. This Mannheimia succiniciproducens (strain KCTC 0769BP / MBEL55E) protein is Iron-sulfur cluster assembly protein CyaY.